Consider the following 501-residue polypeptide: Circadian clock oscillator protein KaiC (501 aa).

KaiC domains follow at residues 1–232 (MQVQ…ITVF) and 246–501 (IRIS…REKK). 17 residues coordinate ATP: Gly34, Thr35, Gly36, Lys37, Thr38, Ser74, Lys209, Leu210, Arg211, Thr213, His215, Thr275, Gly276, Thr277, Gly278, Lys279, and Thr280. Position 38 (Thr38) interacts with Mg(2+). Residues Thr280 and Glu303 each contribute to the Mg(2+) site. An ATP-binding site is contributed by Trp316. A Phosphoserine; by autocatalysis modification is found at Ser416. Thr417 is modified (phosphothreonine; by autocatalysis). The ATP site is built by Arg436, Lys442, Met443, Arg444, Ser446, His448, and Lys450.

The protein belongs to the KaiC family. Homohexamer; hexamerization is dependent on ATP-binding. Component of the KaiBC complex. KaiC interacts with SasA, activating its autokinase function and leading to RpaA activation. Mg(2+) serves as cofactor. In terms of processing, phosphorylated on serine and threonine residues by autocatalysis. Has a 4 step phosphorylation cycle; the autokinase acts first on Thr-417, then Ser-416. When Ser-416 is modified KaiC switches to an autophosphatase mode, acting first on phospho-Thr-417 then phospho-Ser-416.

The enzyme catalyses L-seryl-[protein] + ATP = O-phospho-L-seryl-[protein] + ADP + H(+). It carries out the reaction L-threonyl-[protein] + ATP = O-phospho-L-threonyl-[protein] + ADP + H(+). The catalysed reaction is ATP + H2O = ADP + phosphate + H(+). Functionally, central component of the KaiBC oscillator complex, which constitutes the main circadian regulator in cyanobacteria. Its composition changes during the circadian cycle to control KaiC phosphorylation. Autophosphorylates and has a weak ATPase activity; ATPase activity defines the circadian period. This Prochlorococcus marinus (strain SARG / CCMP1375 / SS120) protein is Circadian clock oscillator protein KaiC.